The primary structure comprises 286 residues: tRNA (guanine-N(7)-)-methyltransferase (286 aa).

Positions 91, 116, 143, and 165 each coordinate S-adenosyl-L-methionine. Asp-165 is a catalytic residue. Substrate is bound by residues Lys-169, Asp-201, and 262 to 265 (TNFE).

It belongs to the class I-like SAM-binding methyltransferase superfamily. TrmB family.

The enzyme catalyses guanosine(46) in tRNA + S-adenosyl-L-methionine = N(7)-methylguanosine(46) in tRNA + S-adenosyl-L-homocysteine. It functions in the pathway tRNA modification; N(7)-methylguanine-tRNA biosynthesis. In terms of biological role, catalyzes the formation of N(7)-methylguanine at position 46 (m7G46) in tRNA. In Bifidobacterium longum subsp. infantis (strain ATCC 15697 / DSM 20088 / JCM 1222 / NCTC 11817 / S12), this protein is tRNA (guanine-N(7)-)-methyltransferase.